The following is a 616-amino-acid chain: Adenylosuccinate synthetase 2 (616 aa).

The disordered stretch occupies residues 1–26; that stretch reads MDKQAERDQSAGPVKTPQETQPPAHN. Residues 17–26 are compositionally biased toward polar residues; it reads PQETQPPAHN. GTP contacts are provided by residues 87–93 and 117–119; these read GDEGKGK and GHT. Asp88 (proton acceptor) is an active-site residue. Mg(2+) is bound by residues Asp88 and Gly117. IMP is bound by residues 88–91, 115–118, Thr202, Lys216, Gln328, Thr343, and Lys472; these read DEGK and NAGH. The Proton donor role is filled by His118. 468-474 is a binding site for substrate; that stretch reads AVTKKPR. GTP is bound by residues Arg474 and 603–605; that span reads GNG.

The protein belongs to the adenylosuccinate synthetase family. In terms of assembly, homodimer. The cofactor is Mg(2+).

Its subcellular location is the cytoplasm. It catalyses the reaction IMP + L-aspartate + GTP = N(6)-(1,2-dicarboxyethyl)-AMP + GDP + phosphate + 2 H(+). Its pathway is purine metabolism; AMP biosynthesis via de novo pathway; AMP from IMP: step 1/2. Functionally, plays an important role in the salvage pathway for purine nucleotide biosynthesis. Catalyzes the first committed step in the biosynthesis of AMP from IMP. This chain is Adenylosuccinate synthetase 2, found in Trypanosoma cruzi (strain CL Brener).